A 414-amino-acid chain; its full sequence is Ornithine aminotransferase (414 aa).

A disulfide bridge links Cys154 with Cys163. Position 262 is an N6-(pyridoxal phosphate)lysine (Lys262).

Belongs to the class-III pyridoxal-phosphate-dependent aminotransferase family. As to quaternary structure, homodimer. Requires pyridoxal 5'-phosphate as cofactor. In terms of processing, the disulfide bond between Cys-154 and Cys-163 is reduced by TRX1 which increases OAT catalytic activity.

It localises to the cytoplasm. It catalyses the reaction a 2-oxocarboxylate + L-ornithine = L-glutamate 5-semialdehyde + an L-alpha-amino acid. The catalysed reaction is L-ornithine + 2-oxoglutarate = L-glutamate 5-semialdehyde + L-glutamate. Its pathway is amino-acid biosynthesis; L-proline biosynthesis; L-glutamate 5-semialdehyde from L-ornithine: step 1/1. Its activity is regulated as follows. Unlike for mammalian OATs, activity is increased by TRX1-mediated reduction of the disulfide bond between Cys-154 and Cys-163. Binding to TRX1 may also induce conformational changes that facilitate substrate binding. Functionally, catalyzes the transamination of alpha-ketoglutarate with ornithine or N-acetylornithine and of glutamate-5-semialdehyde with glutamate and alanine. The polypeptide is Ornithine aminotransferase (Plasmodium chabaudi chabaudi).